Here is a 125-residue protein sequence, read N- to C-terminus: Small ribosomal subunit protein uS12 (125 aa).

Residues 9–31 (RQGREVEKIKSKSPAMENSPQRR) are disordered. Position 89 is a 3-methylthioaspartic acid (Asp-89). The segment at 105–125 (QGVKDRKQSRSKYGAKRPKAK) is disordered. Over residues 113-125 (SRSKYGAKRPKAK) the composition is skewed to basic residues.

It belongs to the universal ribosomal protein uS12 family. In terms of assembly, part of the 30S ribosomal subunit. Contacts proteins S8 and S17. May interact with IF1 in the 30S initiation complex.

In terms of biological role, with S4 and S5 plays an important role in translational accuracy. Functionally, interacts with and stabilizes bases of the 16S rRNA that are involved in tRNA selection in the A site and with the mRNA backbone. Located at the interface of the 30S and 50S subunits, it traverses the body of the 30S subunit contacting proteins on the other side and probably holding the rRNA structure together. The combined cluster of proteins S8, S12 and S17 appears to hold together the shoulder and platform of the 30S subunit. This is Small ribosomal subunit protein uS12 from Polaromonas naphthalenivorans (strain CJ2).